A 545-amino-acid polypeptide reads, in one-letter code: Chaperonin GroEL 1 (545 aa).

ATP contacts are provided by residues 30-33 (TLGP), Lys51, 87-91 (DGTTT), Gly415, and Asp496.

Belongs to the chaperonin (HSP60) family. In terms of assembly, forms a cylinder of 14 subunits composed of two heptameric rings stacked back-to-back. Interacts with the co-chaperonin GroES.

It localises to the cytoplasm. It carries out the reaction ATP + H2O + a folded polypeptide = ADP + phosphate + an unfolded polypeptide.. In terms of biological role, together with its co-chaperonin GroES, plays an essential role in assisting protein folding. The GroEL-GroES system forms a nano-cage that allows encapsulation of the non-native substrate proteins and provides a physical environment optimized to promote and accelerate protein folding. The protein is Chaperonin GroEL 1 of Nitrobacter hamburgensis (strain DSM 10229 / NCIMB 13809 / X14).